The sequence spans 390 residues: S-adenosylmethionine synthase 1 (390 aa).

A Mg(2+)-binding site is contributed by Glu-9. His-15 is a binding site for ATP. Glu-43 provides a ligand contact to K(+). Residues Glu-56 and Gln-99 each coordinate L-methionine. Residues Asp-167–Lys-169, Ser-235–Phe-238, Asp-246, Arg-252–Lys-253, Ala-269, Lys-273, and Lys-277 each bind ATP. Residue Asp-246 participates in L-methionine binding. Residue Lys-277 coordinates L-methionine.

It belongs to the AdoMet synthase family. Homotetramer. Requires Mn(2+) as cofactor. Mg(2+) is required as a cofactor. It depends on Co(2+) as a cofactor. The cofactor is K(+).

The protein localises to the cytoplasm. The enzyme catalyses L-methionine + ATP + H2O = S-adenosyl-L-methionine + phosphate + diphosphate. It functions in the pathway amino-acid biosynthesis; S-adenosyl-L-methionine biosynthesis; S-adenosyl-L-methionine from L-methionine: step 1/1. In terms of biological role, catalyzes the formation of S-adenosylmethionine from methionine and ATP. The reaction comprises two steps that are both catalyzed by the same enzyme: formation of S-adenosylmethionine (AdoMet) and triphosphate, and subsequent hydrolysis of the triphosphate. The polypeptide is S-adenosylmethionine synthase 1 (SAMS1) (Nicotiana tabacum (Common tobacco)).